Here is a 245-residue protein sequence, read N- to C-terminus: MARRCQFENSNDIGVFCKLTSAYCLVSVGASENFYSVFESELVPHIPVIHTSIGGTRIVGRVTCGNKNGLLVPNTCNDNELRNIRNSLPDNVRVRRIEEKLSALGNCVVANDYVALIHPDLDRESEEIIADTLGVEVFRTTIANNVLVGTYCVINNRGGLVHPLASVEELDELANLLQIPLCAGTINRGSDVIGAGLVVNDWAAFCGLDTTSTEISVVENIFKLNEMKDENMDNEMRKDFVMNLE.

The protein belongs to the eIF-6 family. In terms of assembly, monomer. Associates with the 60S ribosomal subunit.

It is found in the cytoplasm. It localises to the nucleus. The protein localises to the nucleolus. Its function is as follows. Binds to the 60S ribosomal subunit and prevents its association with the 40S ribosomal subunit to form the 80S initiation complex in the cytoplasm. May also be involved in ribosome biogenesis. The chain is Eukaryotic translation initiation factor 6 from Tetrahymena thermophila (strain SB210).